We begin with the raw amino-acid sequence, 543 residues long: Cytochrome P450 monooxygenase sphH (543 aa).

The next 2 helical transmembrane spans lie at 1 to 21 (MGPIHNYFGVVCLGIAASVYF) and 32 to 52 (IATFAVLLTGIAISKLLYQLF). A heme-binding site is contributed by cysteine 487.

The protein belongs to the cytochrome P450 family. Heme is required as a cofactor.

The protein localises to the membrane. It catalyses the reaction presphingofungin + 2 reduced [NADPH--hemoprotein reductase] + O2 = sphingofungin B1 + 2 oxidized [NADPH--hemoprotein reductase] + H2O + 2 H(+). It functions in the pathway secondary metabolite biosynthesis. Cytochrome P450 monooxygenase; part of the gene cluster that mediates the biosynthesis of sphingofungins, bioactive molecules acting as sphingolipid inhibitors via inhibiting serine palmitoyl transferase (SPT). Within the pathway, sphH catalyzes the conversion of presphingofungin into sphingofungin B1 via hydroxylagtion at position C-14. Sphingofungin biosynthesis starts with the PKS sphB that produces an C18 polyketide precursor 3-hydroxyoctadeca-4,10-dienoyl-ACP containing one delta-6 desaturation and one delta-12 desaturation. The aminoacyl transferase sphA uses the sphB product to produce 3-keto-presphingofungin by adding an aminomalonate molecule. SphF then reduces the C-3 ketone of 3-keto-presphingofungin which leads to presphingofungin. The cytochrome P450 monooxygenase sphH converts presphingofungin into sphingofungin B1 which is further converted to sphingofungin B by the dioxygenase sphC. SphC is also able to convert presphingofungin into sphingofungin B2. The acetyltransferase sphE acetylates sphingofungin B to produce sphingofungin C, but can also convert sphingofungin B1 into sphingofungin C1 and sphingofungin B2 into sphingofungin C2. Finally, sphingofungin C can be spontaneously converted into sphingofungin D. In Aspergillus fumigatus (strain CBS 144.89 / FGSC A1163 / CEA10) (Neosartorya fumigata), this protein is Cytochrome P450 monooxygenase sphH.